The chain runs to 541 residues: MKNTFARYSLTIPSIPENVISHLRQWNEWMVGDTSDDSPGPSSTVSTMTTTGTVDRRSLLSAASMVRQQSDTTGVRRLVRARAVQEDDEAGPHSSNNLAATMSPNLSRPTRYVKSVSQQRSESYIQLNQYRLMEEIGQGSYGIVKLAYNEEDKNLYALKVLDKMKLLKNFACFRQPPPRRNKENAAPSVLRNPLQLVQKEIAILKKLSHPNVVKLVEVLDDPNDNYLYMVFEFVEKGSILEIPTDKPLDEDTAWSYFRDTLCGLEYLHYQKIVHRDIKPSNLLLSDIGQVKIADFGVSCEFEGIDAFLSGTAGTPAFMAPEALTEGANHFYSGRAQDIWSLGITLYAFVIGTVPFVDNYIIALHKKIKNDPIVFPEAPILSEALQDIILGMLKKDPGHRLMLHEVKVHTWVTRDGTVPMSSEQENCHLVTVTEEEIENCVRVIPRLDTLILVKAMGHRKRFGNPFRNKLSAQSSIRDRRKSSSVKDPTYVPPPNSPPATSNNNLNSTKVDRPEIKCIEMNLSGLTLKVDEAMQSKVESARQ.

A disordered region spans residues 83–106; that stretch reads AVQEDDEAGPHSSNNLAATMSPNL. Positions 93 to 106 are enriched in polar residues; sequence HSSNNLAATMSPNL. The Protein kinase domain occupies 130–411; it reads YRLMEEIGQG…LHEVKVHTWV (282 aa). Residues 136-144 and Lys-159 contribute to the ATP site; that span reads IGQGSYGIV. The RP domain stretch occupies residues 169–190; sequence NFACFRQPPPRRNKENAAPSVL. Catalysis depends on Asp-276, which acts as the Proton acceptor. Residues 437–442 form an autoinhibitory domain region; it reads ENCVRV. A calmodulin-binding region spans residues 440–465; that stretch reads VRVIPRLDTLILVKAMGHRKRFGNPF. The interval 462–512 is disordered; it reads GNPFRNKLSAQSSIRDRRKSSSVKDPTYVPPPNSPPATSNNNLNSTKVDRP. The segment covering 497 to 507 has biased composition (low complexity); the sequence is PATSNNNLNST.

The protein belongs to the protein kinase superfamily. Ser/Thr protein kinase family. The cofactor is Mg(2+). Expressed in head and tail neurons and vulval muscles.

Its subcellular location is the cytoplasm. It carries out the reaction L-seryl-[protein] + ATP = O-phospho-L-seryl-[protein] + ADP + H(+). It catalyses the reaction L-threonyl-[protein] + ATP = O-phospho-L-threonyl-[protein] + ADP + H(+). With respect to regulation, activated by Ca(2+)/calmodulin. Binding of calmodulin may relieve intrasteric autoinhibition. Calcium/calmodulin-dependent protein kinase which phosphorylates cmk-1. Component of a calcium-triggered signaling cascade involved in CRE-mediated transcriptional activation, probably through cmk-1-mediated crh-1/CREB phosphorylation. Plays a role in salt-avoidance learning behavior via the phosphorylation of cmk-1. The sequence is that of Calcium/calmodulin-dependent protein kinase kinase from Caenorhabditis elegans.